The chain runs to 565 residues: Periplasmic trehalase (565 aa).

Positions 1-30 (MKSPAPSRPQKMALIPACIFLCFAALSVQA) are cleaved as a signal peptide. Substrate-binding positions include arginine 152, 159 to 160 (WD), asparagine 196, 205 to 207 (RSQ), 277 to 279 (RPE), and glycine 310. Residues aspartate 312 and glutamate 496 each act as proton donor/acceptor in the active site. Residue glutamate 511 participates in substrate binding. The segment at 538–565 (PCDNVPATRPTVKSATTQPSTKEAQPTP) is disordered. The span at 548–565 (TVKSATTQPSTKEAQPTP) shows a compositional bias: polar residues.

It belongs to the glycosyl hydrolase 37 family. As to quaternary structure, monomer.

Its subcellular location is the periplasm. The enzyme catalyses alpha,alpha-trehalose + H2O = alpha-D-glucose + beta-D-glucose. Provides the cells with the ability to utilize trehalose at high osmolarity by splitting it into glucose molecules that can subsequently be taken up by the phosphotransferase-mediated uptake system. The sequence is that of Periplasmic trehalase from Escherichia coli (strain 55989 / EAEC).